Reading from the N-terminus, the 321-residue chain is Protease HtpX homolog (321 aa).

2 consecutive transmembrane segments (helical) span residues 6-26 and 28-48; these read TAMLLAFMTALFMGVGFLIGG and GGMMIALLIAAGMNLFSYWNS. Zn(2+) is bound at residue His-130. Glu-131 is a catalytic residue. His-134 provides a ligand contact to Zn(2+). 2 consecutive transmembrane segments (helical) span residues 145–165 and 173–193; these read ITATLAGAISMLGNFAFFFGG and PLGFIGVLVAMIVAPLAAMLV. Zn(2+) is bound at residue Glu-202. The interval 281 to 321 is disordered; it reads EFSPRASTPPPSGDRPVRKSGSVPTTGWRRGNENERKGPWS. Residues 310-321 show a composition bias toward basic and acidic residues; sequence RGNENERKGPWS.

This sequence belongs to the peptidase M48B family. Requires Zn(2+) as cofactor.

Its subcellular location is the cell inner membrane. In Agrobacterium fabrum (strain C58 / ATCC 33970) (Agrobacterium tumefaciens (strain C58)), this protein is Protease HtpX homolog.